Here is a 297-residue protein sequence, read N- to C-terminus: Bifunctional protein FolD (297 aa).

NADP(+)-binding positions include glycine 164–serine 166, serine 193, and valine 234.

Belongs to the tetrahydrofolate dehydrogenase/cyclohydrolase family. Homodimer.

It carries out the reaction (6R)-5,10-methylene-5,6,7,8-tetrahydrofolate + NADP(+) = (6R)-5,10-methenyltetrahydrofolate + NADPH. The catalysed reaction is (6R)-5,10-methenyltetrahydrofolate + H2O = (6R)-10-formyltetrahydrofolate + H(+). The protein operates within one-carbon metabolism; tetrahydrofolate interconversion. Catalyzes the oxidation of 5,10-methylenetetrahydrofolate to 5,10-methenyltetrahydrofolate and then the hydrolysis of 5,10-methenyltetrahydrofolate to 10-formyltetrahydrofolate. The protein is Bifunctional protein FolD of Natronomonas pharaonis (strain ATCC 35678 / DSM 2160 / CIP 103997 / JCM 8858 / NBRC 14720 / NCIMB 2260 / Gabara) (Halobacterium pharaonis).